A 224-amino-acid chain; its full sequence is MAITDWPEEQRPRERLIRHGAAILSDAELLAVFLRVGVTGKSAVDLGRDMVAHFGSLNGLFSATLNDFSKINGLGPAKYAQLQAVLELARRSLCEELQAGVALNSPQAVKQYLQLLLSGRAYESFVILFLDVKNRLIVCDEMFRGTLTHTSVYPREIVKAALGHNAASVILAHNHPSGTPEPSAADQTLTQALKQALMLIDVRVLDHFVVAGKQVYSFAEQGQL.

An MPN domain is found at 102–224 (ALNSPQAVKQ…VYSFAEQGQL (123 aa)). His-173, His-175, and Asp-186 together coordinate Zn(2+). The JAMM motif signature appears at 173–186 (HNHPSGTPEPSAAD).

Belongs to the UPF0758 family.

The polypeptide is UPF0758 protein HEAR2468 (Herminiimonas arsenicoxydans).